Reading from the N-terminus, the 232-residue chain is Ribonuclease P protein component 3 (232 aa).

It belongs to the eukaryotic/archaeal RNase P protein component 3 family. In terms of assembly, consists of a catalytic RNA component and at least 5 protein subunits.

Its subcellular location is the cytoplasm. The enzyme catalyses Endonucleolytic cleavage of RNA, removing 5'-extranucleotides from tRNA precursor.. Part of ribonuclease P, a protein complex that generates mature tRNA molecules by cleaving their 5'-ends. In Methanococcus maripaludis (strain DSM 14266 / JCM 13030 / NBRC 101832 / S2 / LL), this protein is Ribonuclease P protein component 3.